The following is a 637-amino-acid chain: MSQQETHGFQTEVKQLLHLMIHSLYSNKEIFLRELVSNAADAADKLRYLALTNDALYEGDGELRVRISADKEKGTVTIEDNGVGMTRDGVIEHLGTIAKSGTADFFKNLSGESSKDSQLIGQFGVGFYSAFIVAKKVTVRTRAAGHKADEAVLWESEGEGNFTVDTITKASRGTEITLHLRDEEKEFADDWRLRSIITKYSDHISVPVEMWQEGTPESDGADGEKIPATEGQWKVMNKATALWMRSKADISDEEYQEFYKHISHDYTDALLWSHNRVEGKQEYTNLLYIPAKAPWDMWNRDRKHGLKLFVQRVFIMDDAEQFMPSYLRFVQGLIDSNDLPLNVSREILQDNHVTKAMRTGITKRVLGMLEKLAKDDAEKYQQFWAEFGQVLKEGPAEDFANRERIAGLLRFASTHTGSAAPTVSLDDYISRMKEGQTKIYYIVADSHEAAANSPHLELLRKKGIEVLLMSERIDEWLINHLTEYKEKQLHSVTRGDLELGELEDASEKEAQEKLEQESVALVERIKAALGSTVADVKVTSRLTDTPACVVAGEGEMSTQMIKLMQAAGQPVPEVKPTFEINPAHPLVSRLNDLQDEAAFADWSNLLLQQAQLSEKGSLADPSAFIKLMNQMLLANMK.

Residues 1 to 345 (MSQQETHGFQ…SNDLPLNVSR (345 aa)) are a; substrate-binding. The segment at 346–562 (EILQDNHVTK…EGEMSTQMIK (217 aa)) is b. The tract at residues 563–637 (LMQAAGQPVP…MNQMLLANMK (75 aa)) is c.

It belongs to the heat shock protein 90 family. In terms of assembly, homodimer.

It localises to the cytoplasm. Its function is as follows. Molecular chaperone. Has ATPase activity. This is Chaperone protein HtpG from Shewanella baltica (strain OS185).